The sequence spans 178 residues: ATP synthase subunit delta (178 aa).

The protein belongs to the ATPase delta chain family. F-type ATPases have 2 components, F(1) - the catalytic core - and F(0) - the membrane proton channel. F(1) has five subunits: alpha(3), beta(3), gamma(1), delta(1), epsilon(1). F(0) has three main subunits: a(1), b(2) and c(10-14). The alpha and beta chains form an alternating ring which encloses part of the gamma chain. F(1) is attached to F(0) by a central stalk formed by the gamma and epsilon chains, while a peripheral stalk is formed by the delta and b chains.

Its subcellular location is the cell membrane. In terms of biological role, f(1)F(0) ATP synthase produces ATP from ADP in the presence of a proton or sodium gradient. F-type ATPases consist of two structural domains, F(1) containing the extramembraneous catalytic core and F(0) containing the membrane proton channel, linked together by a central stalk and a peripheral stalk. During catalysis, ATP synthesis in the catalytic domain of F(1) is coupled via a rotary mechanism of the central stalk subunits to proton translocation. Its function is as follows. This protein is part of the stalk that links CF(0) to CF(1). It either transmits conformational changes from CF(0) to CF(1) or is implicated in proton conduction. The chain is ATP synthase subunit delta from Buchnera aphidicola subsp. Baizongia pistaciae (strain Bp).